The following is a 415-amino-acid chain: Serine/threonine transporter SstT (415 aa).

8 helical membrane-spanning segments follow: residues 23 to 43 (ILIG…AAIA), 47 to 67 (LGTL…LMLV), 85 to 105 (ILFL…LFSF), 144 to 164 (ALLN…GFAL), 181 to 201 (AVTF…FGLV), 220 to 240 (LLVL…LLVF), 293 to 313 (IPLG…VLTL), and 333 to 353 (VVAS…LLLI).

The protein belongs to the dicarboxylate/amino acid:cation symporter (DAACS) (TC 2.A.23) family.

It is found in the cell inner membrane. It catalyses the reaction L-serine(in) + Na(+)(in) = L-serine(out) + Na(+)(out). It carries out the reaction L-threonine(in) + Na(+)(in) = L-threonine(out) + Na(+)(out). Involved in the import of serine and threonine into the cell, with the concomitant import of sodium (symport system). This Klebsiella pneumoniae (strain 342) protein is Serine/threonine transporter SstT.